A 250-amino-acid polypeptide reads, in one-letter code: NADH-quinone oxidoreductase subunit C (250 aa).

Belongs to the complex I 30 kDa subunit family. In terms of assembly, NDH-1 is composed of 14 different subunits. Subunits NuoB, C, D, E, F, and G constitute the peripheral sector of the complex.

The protein resides in the cell inner membrane. It catalyses the reaction a quinone + NADH + 5 H(+)(in) = a quinol + NAD(+) + 4 H(+)(out). Its function is as follows. NDH-1 shuttles electrons from NADH, via FMN and iron-sulfur (Fe-S) centers, to quinones in the respiratory chain. The immediate electron acceptor for the enzyme in this species is believed to be ubiquinone. Couples the redox reaction to proton translocation (for every two electrons transferred, four hydrogen ions are translocated across the cytoplasmic membrane), and thus conserves the redox energy in a proton gradient. The sequence is that of NADH-quinone oxidoreductase subunit C from Xanthomonas euvesicatoria pv. vesicatoria (strain 85-10) (Xanthomonas campestris pv. vesicatoria).